The chain runs to 302 residues: Homoserine O-acetyltransferase (302 aa).

The active-site Acyl-thioester intermediate is C142. 2 residues coordinate substrate: K163 and S192. H235 (proton acceptor) is an active-site residue. Residue E237 is part of the active site. Residue R249 coordinates substrate.

It belongs to the MetA family.

The protein localises to the cytoplasm. It carries out the reaction L-homoserine + acetyl-CoA = O-acetyl-L-homoserine + CoA. It functions in the pathway amino-acid biosynthesis; L-methionine biosynthesis via de novo pathway; O-acetyl-L-homoserine from L-homoserine: step 1/1. Transfers an acetyl group from acetyl-CoA to L-homoserine, forming acetyl-L-homoserine. In Geobacillus kaustophilus (strain HTA426), this protein is Homoserine O-acetyltransferase.